A 220-amino-acid polypeptide reads, in one-letter code: V-set and transmembrane domain-containing protein 2-like protein (220 aa).

An N-terminal signal peptide occupies residues 1 to 24 (MGAPLAAALGALHYLALFLQLGGA). The Ig-like domain maps to 41–158 (ALFTETPHDM…DGGRGVPRVL (118 aa)). Cys62 and Cys142 are oxidised to a cystine. The segment covering 165–180 (PAPPRAPRPRGQPPGE) has biased composition (pro residues). The interval 165 to 220 (PAPPRAPRPRGQPPGEEPGRGPTLLFLIILPGTGSGTPREAEPHQPHAGGCPARQS) is disordered.

This is V-set and transmembrane domain-containing protein 2-like protein (Vstm2l) from Mus musculus (Mouse).